We begin with the raw amino-acid sequence, 117 residues long: Large ribosomal subunit protein bL19 (117 aa).

The protein belongs to the bacterial ribosomal protein bL19 family.

In terms of biological role, this protein is located at the 30S-50S ribosomal subunit interface and may play a role in the structure and function of the aminoacyl-tRNA binding site. The sequence is that of Large ribosomal subunit protein bL19 from Proteus mirabilis (strain HI4320).